A 295-amino-acid chain; its full sequence is MRHLITAKDFNKVEIMELFKEASDFLDEKPRTFLKGKSITTIFFENSTRTLSSFESAARRLGARVLRLDVSRSSSSKGETLYDTAANLDAMSPNAIVVRHANSGVPLILAKHMHCPVVNGGDGKHAHPTQALLDLFTIYNHFQGDVEGKKICIVGDIKNSRVAASNIELLSRFNLDITLVAPPHFMPNTHLKKHYKLDENIIANSDIIMSLRTQTERHNKTVYASLKDYANDFCIQKSLVKDKKLILLHPGPVNRNIDISDEMMSDERTLVLKQVKNGVAIRMAVLKKLILENEG.

Carbamoyl phosphate is bound by residues Arg-49 and Thr-50. Residue Lys-77 coordinates L-aspartate. The carbamoyl phosphate site is built by Arg-99, His-127, and Gln-130. Residues Arg-161 and Arg-212 each contribute to the L-aspartate site. The carbamoyl phosphate site is built by Gly-251 and Pro-252.

Belongs to the aspartate/ornithine carbamoyltransferase superfamily. ATCase family. Heterododecamer (2C3:3R2) of six catalytic PyrB chains organized as two trimers (C3), and six regulatory PyrI chains organized as three dimers (R2).

It catalyses the reaction carbamoyl phosphate + L-aspartate = N-carbamoyl-L-aspartate + phosphate + H(+). It participates in pyrimidine metabolism; UMP biosynthesis via de novo pathway; (S)-dihydroorotate from bicarbonate: step 2/3. Its function is as follows. Catalyzes the condensation of carbamoyl phosphate and aspartate to form carbamoyl aspartate and inorganic phosphate, the committed step in the de novo pyrimidine nucleotide biosynthesis pathway. The polypeptide is Aspartate carbamoyltransferase catalytic subunit (Campylobacter jejuni subsp. jejuni serotype O:23/36 (strain 81-176)).